The sequence spans 283 residues: Non-selective voltage-gated ion channel VDAC3 (283 aa).

Cys2 bears the N-acetylcysteine mark. Thr4 carries the phosphothreonine modification. Residues Lys12, Lys15, and Lys20 each carry the N6-acetyllysine modification. 2 consecutive transmembrane segments (beta stranded) span residues 26–35 and 39–47; these read MVKIDLKTKS and VEFSTSGHA. Thr33 is subject to Phosphothreonine. Residue Lys53 forms a Glycyl lysine isopeptide (Lys-Gly) (interchain with G-Cter in ubiquitin) linkage. A run of 3 beta stranded transmembrane segments spans residues 54–64, 69–76, and 80–89; these read ASGNLETKYKV, LIFTQKWN, and TLGTEISWEN. The residue at position 90 (Lys90) is an N6-acetyllysine. Residues 95-104 traverse the membrane as a beta stranded segment; it reads LKLTVDTIFV. Residues Lys109 and Lys110 each participate in a glycyl lysine isopeptide (Lys-Gly) (interchain with G-Cter in ubiquitin) cross-link. A run of 10 beta stranded transmembrane segments spans residues 111-120, 123-130, 137-145, 150-158, 163-175, 178-185, 189-198, 202-211, 218-227, and 231-238; these read SGKLKASYRR, FSVGSKVD, TIYGWAVLA, LAGYQMSFD, KLCQNNFALGYKA, FQLHTHVN, EFGGSIYQRV, IETSINLAWT, RFGIAAKYRL, and TSLSAKVN. Ser241 is modified (phosphoserine). NAD(+)-binding positions include 242–244 and 260–264; these read LIG and SALVD. Transmembrane regions (beta stranded) follow at residues 242-251 and 254-263; these read LIGLGYTQSL and GVKLTLSALV. Position 266 is an N6-acetyllysine; alternate (Lys266). Lys266 is covalently cross-linked (Glycyl lysine isopeptide (Lys-Gly) (interchain with G-Cter in ubiquitin); alternate). Residues 273-282 form a beta stranded membrane-spanning segment; the sequence is HKVGLGFELE.

It belongs to the eukaryotic mitochondrial porin family. Interacts with ARMC12 in a TBC1D21-dependent manner. Interacts with MISFA. Post-translationally, ubiquitinated by PRKN during mitophagy, leading to its degradation and enhancement of mitophagy. Deubiquitinated by USP30. In terms of tissue distribution, isoform 1 is widely expressed with strong expression in atrium and ascitic tumor, lower levels in brain and very low levels in liver and kidney. Isoform 2 is also widely expressed with highest levels in brain but no expression in kidney. Also expressed in flagella of epididymal sperm.

It localises to the mitochondrion outer membrane. The protein localises to the membrane. The enzyme catalyses chloride(in) = chloride(out). It carries out the reaction K(+)(in) = K(+)(out). Functionally, non-selective voltage-gated ion channel that mediates the transport of anions and cations through the mitochondrion outer membrane and plasma membrane. Forms a high-conducting channel with a stable open state and a voltage-induced closure with a mild preference for anions over cations. Involved in male fertility and sperm mitochondrial sheath formation. This is Non-selective voltage-gated ion channel VDAC3 from Rattus norvegicus (Rat).